Reading from the N-terminus, the 22-residue chain is Superoxide dismutase [Cu-Zn] (22 aa).

It belongs to the Cu-Zn superoxide dismutase family. As to quaternary structure, homodimer. Requires Cu cation as cofactor. Zn(2+) serves as cofactor.

It localises to the cytoplasm. The enzyme catalyses 2 superoxide + 2 H(+) = H2O2 + O2. In terms of biological role, destroys radicals which are normally produced within the cells and which are toxic to biological systems. The sequence is that of Superoxide dismutase [Cu-Zn] from Hordeum vulgare (Barley).